The following is a 476-amino-acid chain: Bifunctional protein HldE (476 aa).

A ribokinase region spans residues 1 to 320 (MQNPHIPSFA…RAVHQEGGSG (320 aa)). ATP is bound at residue 196–199 (NLSE). Aspartate 265 is an active-site residue. The interval 345–476 (FTNGCFDIIH…KIVERIREKD (132 aa)) is cytidylyltransferase.

This sequence in the N-terminal section; belongs to the carbohydrate kinase PfkB family. The protein in the C-terminal section; belongs to the cytidylyltransferase family. In terms of assembly, homodimer.

It carries out the reaction D-glycero-beta-D-manno-heptose 7-phosphate + ATP = D-glycero-beta-D-manno-heptose 1,7-bisphosphate + ADP + H(+). It catalyses the reaction D-glycero-beta-D-manno-heptose 1-phosphate + ATP + H(+) = ADP-D-glycero-beta-D-manno-heptose + diphosphate. It participates in nucleotide-sugar biosynthesis; ADP-L-glycero-beta-D-manno-heptose biosynthesis; ADP-L-glycero-beta-D-manno-heptose from D-glycero-beta-D-manno-heptose 7-phosphate: step 1/4. It functions in the pathway nucleotide-sugar biosynthesis; ADP-L-glycero-beta-D-manno-heptose biosynthesis; ADP-L-glycero-beta-D-manno-heptose from D-glycero-beta-D-manno-heptose 7-phosphate: step 3/4. In terms of biological role, catalyzes the phosphorylation of D-glycero-D-manno-heptose 7-phosphate at the C-1 position to selectively form D-glycero-beta-D-manno-heptose-1,7-bisphosphate. Functionally, catalyzes the ADP transfer from ATP to D-glycero-beta-D-manno-heptose 1-phosphate, yielding ADP-D-glycero-beta-D-manno-heptose. This Alcanivorax borkumensis (strain ATCC 700651 / DSM 11573 / NCIMB 13689 / SK2) protein is Bifunctional protein HldE.